The primary structure comprises 336 residues: Cellodextrinase A (336 aa).

Glu-141 acts as the Proton donor in catalysis.

It belongs to the glycosyl hydrolase 5 (cellulase A) family.

It is found in the secreted. Functionally, crystalline cellulose degradation. This chain is Cellodextrinase A (celA), found in Ruminococcus flavefaciens.